Reading from the N-terminus, the 284-residue chain is L-ribulose-5-phosphate 3-epimerase UlaE (284 aa).

Belongs to the L-ribulose-5-phosphate 3-epimerase family.

It carries out the reaction L-ribulose 5-phosphate = L-xylulose 5-phosphate. It participates in cofactor degradation; L-ascorbate degradation; D-xylulose 5-phosphate from L-ascorbate: step 3/4. Functionally, catalyzes the isomerization of L-xylulose-5-phosphate to L-ribulose-5-phosphate. Is involved in the anaerobic L-ascorbate utilization. This chain is L-ribulose-5-phosphate 3-epimerase UlaE, found in Escherichia coli (strain K12 / MC4100 / BW2952).